Here is a 281-residue protein sequence, read N- to C-terminus: Proteasome subunit beta (281 aa).

A propeptide spans 1-53 (removed in mature form; by autocatalysis); it reads MEANTRSTGRLPAAFLTPGSSSFMDFLGEHQPEMLPGNRQLPPVQGVIEAPHG. Thr54 functions as the Nucleophile in the catalytic mechanism.

The protein belongs to the peptidase T1B family. As to quaternary structure, the 20S proteasome core is composed of 14 alpha and 14 beta subunits that assemble into four stacked heptameric rings, resulting in a barrel-shaped structure. The two inner rings, each composed of seven catalytic beta subunits, are sandwiched by two outer rings, each composed of seven alpha subunits. The catalytic chamber with the active sites is on the inside of the barrel. Has probably a gated structure, the ends of the cylinder being occluded by the N-termini of the alpha-subunits. Is likely capped by the proteasome-associated ATPase, ARC.

It is found in the cytoplasm. The enzyme catalyses Cleavage of peptide bonds with very broad specificity.. It participates in protein degradation; proteasomal Pup-dependent pathway. Its activity is regulated as follows. The formation of the proteasomal ATPase ARC-20S proteasome complex, likely via the docking of the C-termini of ARC into the intersubunit pockets in the alpha-rings, may trigger opening of the gate for substrate entry. Interconversion between the open-gate and close-gate conformations leads to a dynamic regulation of the 20S proteasome proteolysis activity. Peptidolytic activity is completely inhibited by lactacystin, and to a lesser extent, by N-acetyl-Leu-Leu-norleucinal (Ac-LLnL) and benzoyloxycarbonyl-Leu-Leu-Leu-vinylsulfone (Z-LLL-VS) in vitro. Functionally, component of the proteasome core, a large protease complex with broad specificity involved in protein degradation. The S.coelicolor proteasome is able to cleave oligopeptides after hydrophobic residues, but not after basic or acidic residues, thus displaying chymotrypsin-like activity but not trypsin-like activity. The protein is Proteasome subunit beta of Streptomyces coelicolor (strain ATCC BAA-471 / A3(2) / M145).